The chain runs to 212 residues: Probable octanoyltransferase (212 aa).

In terms of domain architecture, BPL/LPL catalytic spans 28-199; the sequence is GVSEEMILVT…NLETLLQRQE (172 aa). Substrate-binding positions include 66 to 73, 130 to 132, and 143 to 145; these read RGGDATYH, SVG, and GVA. Catalysis depends on Cys-161, which acts as the Acyl-thioester intermediate.

The protein belongs to the LipB family.

The protein localises to the cytoplasm. It carries out the reaction octanoyl-[ACP] + L-lysyl-[protein] = N(6)-octanoyl-L-lysyl-[protein] + holo-[ACP] + H(+). Its pathway is protein modification; protein lipoylation via endogenous pathway; protein N(6)-(lipoyl)lysine from octanoyl-[acyl-carrier-protein]: step 1/2. In terms of biological role, catalyzes the transfer of endogenously produced octanoic acid from octanoyl-acyl-carrier-protein onto the lipoyl domains of lipoate-dependent enzymes. Lipoyl-ACP can also act as a substrate although octanoyl-ACP is likely to be the physiological substrate. This is Probable octanoyltransferase from Pyrobaculum arsenaticum (strain DSM 13514 / JCM 11321 / PZ6).